Here is a 688-residue protein sequence, read N- to C-terminus: Beta-galactosidase BglY (688 aa).

Position 118 (Arg118) interacts with substrate. Residue Cys122 participates in Zn(2+) binding. Asn156 serves as a coordination point for substrate. Catalysis depends on Glu157, which acts as the Proton donor. Cys162, Cys164, and Cys167 together coordinate Zn(2+). Glu313 (nucleophile) is an active-site residue. Residues Trp321 and Glu361–His364 each bind substrate.

The protein belongs to the glycosyl hydrolase 42 family.

It catalyses the reaction Hydrolysis of terminal non-reducing beta-D-galactose residues in beta-D-galactosides.. With respect to regulation, ca(2+), Mg(2+) and EDTA have little effect on enzyme activity at 1-10 mM. Zn(2+) at 3, 5, 7 or 10 mM inhibits activity by 20%, 30%, 40% and 65%, respectively. In terms of biological role, hydrolyzes o-nitrophenyl-beta-D-galactopyranoside (ONPG) and p-nitrophenyl-beta-D-fucopyranoside (PNPF), but not p-nitrophenyl-beta-D-glucopyranoside (PNPG), p-nitrophenyl-beta-D-xylopyranoside (PNPX) or p-nitrophenyl-beta-D-arabinopyranoside (PNPA). Also hydrolyzes lactose, including lactose in milk. This chain is Beta-galactosidase BglY (bglY), found in Alicyclobacillus acidocaldarius subsp. acidocaldarius (strain ATCC 27009 / DSM 446 / BCRC 14685 / JCM 5260 / KCTC 1825 / NBRC 15652 / NCIMB 11725 / NRRL B-14509 / 104-IA) (Bacillus acidocaldarius).